The chain runs to 79 residues: Translation initiation factor IF-1, chloroplastic (79 aa).

In terms of domain architecture, S1-like spans 1-74 (MTRKNIDLIE…HRGRITFRLR (74 aa)).

It belongs to the IF-1 family. As to quaternary structure, component of the 30S ribosomal translation pre-initiation complex which assembles on the 30S ribosome in the order IF-2 and IF-3, IF-1 and N-formylmethionyl-tRNA(fMet); mRNA recruitment can occur at any time during PIC assembly.

Its subcellular location is the plastid. It localises to the chloroplast. In terms of biological role, one of the essential components for the initiation of protein synthesis. Stabilizes the binding of IF-2 and IF-3 on the 30S subunit to which N-formylmethionyl-tRNA(fMet) subsequently binds. Helps modulate mRNA selection, yielding the 30S pre-initiation complex (PIC). Upon addition of the 50S ribosomal subunit IF-1, IF-2 and IF-3 are released leaving the mature 70S translation initiation complex. This chain is Translation initiation factor IF-1, chloroplastic, found in Chlorella vulgaris (Green alga).